The primary structure comprises 317 residues: Ribosomal large subunit pseudouridine synthase D (317 aa).

The region spanning 19–83 is the S4 RNA-binding domain; the sequence is NRLDQVLASL…AKNDYQAENI (65 aa). The active site involves aspartate 140.

Belongs to the pseudouridine synthase RluA family.

Its subcellular location is the cytoplasm. The enzyme catalyses uridine(1911/1915/1917) in 23S rRNA = pseudouridine(1911/1915/1917) in 23S rRNA. In terms of biological role, responsible for synthesis of pseudouridine from uracil at positions 1911, 1915 and 1917 in 23S ribosomal RNA. This chain is Ribosomal large subunit pseudouridine synthase D (rluD), found in Buchnera aphidicola subsp. Baizongia pistaciae (strain Bp).